We begin with the raw amino-acid sequence, 244 residues long: tRNA (guanine-N(7)-)-methyltransferase (244 aa).

The disordered stretch occupies residues 1–20 (MTNPFDSAGSKAPPKPFTVS). The S-adenosyl-L-methionine site is built by Glu-75, Glu-100, Asp-127, and Asp-150. The active site involves Asp-150. Lys-154 lines the substrate pocket. The tract at residues 156–161 (RHNKRR) is interaction with RNA. Residues Asp-186 and 223-226 (THFE) each bind substrate.

Belongs to the class I-like SAM-binding methyltransferase superfamily. TrmB family.

The enzyme catalyses guanosine(46) in tRNA + S-adenosyl-L-methionine = N(7)-methylguanosine(46) in tRNA + S-adenosyl-L-homocysteine. Its pathway is tRNA modification; N(7)-methylguanine-tRNA biosynthesis. Catalyzes the formation of N(7)-methylguanine at position 46 (m7G46) in tRNA. This chain is tRNA (guanine-N(7)-)-methyltransferase, found in Stenotrophomonas maltophilia (strain K279a).